The chain runs to 300 residues: Acetaldehyde dehydrogenase 1 (300 aa).

11 to 14 (SGNI) contacts NAD(+). Cys-126 acts as the Acyl-thioester intermediate in catalysis. NAD(+) contacts are provided by residues 157–165 (SAGPGTRAN) and Asn-276.

It belongs to the acetaldehyde dehydrogenase family.

The catalysed reaction is acetaldehyde + NAD(+) + CoA = acetyl-CoA + NADH + H(+). The polypeptide is Acetaldehyde dehydrogenase 1 (Rhodococcus erythropolis (strain PR4 / NBRC 100887)).